Here is a 430-residue protein sequence, read N- to C-terminus: Glucose-1-phosphate adenylyltransferase (430 aa).

Residues Gly163, 178–179 (EK), and Ser210 each bind alpha-D-glucose 1-phosphate.

Belongs to the bacterial/plant glucose-1-phosphate adenylyltransferase family. In terms of assembly, homotetramer.

It catalyses the reaction alpha-D-glucose 1-phosphate + ATP + H(+) = ADP-alpha-D-glucose + diphosphate. It functions in the pathway glycan biosynthesis; glycogen biosynthesis. Functionally, involved in the biosynthesis of ADP-glucose, a building block required for the elongation reactions to produce glycogen. Catalyzes the reaction between ATP and alpha-D-glucose 1-phosphate (G1P) to produce pyrophosphate and ADP-Glc. This chain is Glucose-1-phosphate adenylyltransferase, found in Synechococcus elongatus (strain ATCC 33912 / PCC 7942 / FACHB-805) (Anacystis nidulans R2).